Consider the following 188-residue polypeptide: Peptidyl-prolyl cis-trans isomerase H (188 aa).

N-acetylalanine is present on Ala2. One can recognise a PPIase cyclophilin-type domain in the interval 14–176 (FFDVSIGGQE…WTHSLTCPAL (163 aa)).

Belongs to the cyclophilin-type PPIase family. PPIase H subfamily. In terms of assembly, interacts directly with PRPF4. Part of a heteromeric complex containing PPIH, PRPF3 and PRPF4 that is stable in the absence of RNA. Component of the U4/U6-U5 tri-snRNP complex composed of the U4, U6 and U5 snRNAs and at least PRPF3, PRPF4, PRPF6, PRPF8, PRPF31, SNRNP200, TXNL4A, SNRNP40, DDX23, CD2BP2, PPIH, SNU13, EFTUD2, SART1 and USP39. Heterodimer with PRPF18. Heterodimer with PRPF18.

The protein resides in the nucleus speckle. It localises to the cytoplasm. It carries out the reaction [protein]-peptidylproline (omega=180) = [protein]-peptidylproline (omega=0). With respect to regulation, inhibited by cyclosporin A. In terms of biological role, PPIase that catalyzes the cis-trans isomerization of proline imidic peptide bonds in oligopeptides and may therefore assist protein folding. Participates in pre-mRNA splicing. May play a role in the assembly of the U4/U5/U6 tri-snRNP complex, one of the building blocks of the spliceosome. May act as a chaperone. This Mus musculus (Mouse) protein is Peptidyl-prolyl cis-trans isomerase H (Ppih).